Here is a 197-residue protein sequence, read N- to C-terminus: FMN-dependent NADH:quinone oxidoreductase (197 aa).

FMN contacts are provided by residues serine 10, 16–18, 93–96, and 137–140; these read SQS, MYNF, and TRGG.

Belongs to the azoreductase type 1 family. In terms of assembly, homodimer. FMN is required as a cofactor.

It catalyses the reaction 2 a quinone + NADH + H(+) = 2 a 1,4-benzosemiquinone + NAD(+). The enzyme catalyses N,N-dimethyl-1,4-phenylenediamine + anthranilate + 2 NAD(+) = 2-(4-dimethylaminophenyl)diazenylbenzoate + 2 NADH + 2 H(+). Functionally, quinone reductase that provides resistance to thiol-specific stress caused by electrophilic quinones. In terms of biological role, also exhibits azoreductase activity. Catalyzes the reductive cleavage of the azo bond in aromatic azo compounds to the corresponding amines. This chain is FMN-dependent NADH:quinone oxidoreductase, found in Shewanella loihica (strain ATCC BAA-1088 / PV-4).